A 207-amino-acid chain; its full sequence is Large ribosomal subunit protein uL4 (207 aa).

A disordered region spans residues 52-77 (RGWADVSGGGRKPWRQKGTGRARAGS).

It belongs to the universal ribosomal protein uL4 family. As to quaternary structure, part of the 50S ribosomal subunit.

One of the primary rRNA binding proteins, this protein initially binds near the 5'-end of the 23S rRNA. It is important during the early stages of 50S assembly. It makes multiple contacts with different domains of the 23S rRNA in the assembled 50S subunit and ribosome. In terms of biological role, forms part of the polypeptide exit tunnel. This is Large ribosomal subunit protein uL4 from Moorella thermoacetica (strain ATCC 39073 / JCM 9320).